Reading from the N-terminus, the 146-residue chain is MKNEMHLEFSALSQNESFARVTVASFIAQLDPTMDELTEIKTVVSEAVTNAIIHGYEENCEGKVYISVTLEDHVVYMTIRDEGLGITDLEEARQPLFTTKPELERSGMGFTIMENFMDDVSIDSSPEMGTTIRLTKHLSKSKALCN.

This sequence belongs to the anti-sigma-factor family.

It catalyses the reaction L-seryl-[protein] + ATP = O-phospho-L-seryl-[protein] + ADP + H(+). The catalysed reaction is L-threonyl-[protein] + ATP = O-phospho-L-threonyl-[protein] + ADP + H(+). Functionally, binds to sigma F and blocks its ability to form an RNA polymerase holoenzyme (E-sigma F). Phosphorylates SpoIIAA on a serine residue. This phosphorylation may enable SpoIIAA to act as an anti-anti-sigma factor that counteracts SpoIIAB and thus releases sigma F from inhibition. The chain is Anti-sigma F factor (spoIIAB) from Bacillus subtilis (strain 168).